The sequence spans 337 residues: 1-aminocyclopropane-1-carboxylate deaminase (337 aa).

K50 carries the N6-(pyridoxal phosphate)lysine modification.

Belongs to the ACC deaminase/D-cysteine desulfhydrase family. In terms of assembly, homotrimer. The cofactor is pyridoxal 5'-phosphate.

The catalysed reaction is 1-aminocyclopropane-1-carboxylate + H2O = 2-oxobutanoate + NH4(+). Its function is as follows. Catalyzes a cyclopropane ring-opening reaction, the irreversible conversion of 1-aminocyclopropane-1-carboxylate (ACC) to ammonia and alpha-ketobutyrate. Allows growth on ACC as a nitrogen source. The chain is 1-aminocyclopropane-1-carboxylate deaminase from Mesorhizobium japonicum (strain LMG 29417 / CECT 9101 / MAFF 303099) (Mesorhizobium loti (strain MAFF 303099)).